A 397-amino-acid polypeptide reads, in one-letter code: Enoyl-[acyl-carrier-protein] reductase [NADH] (397 aa).

Residues 47–52 (GASTGY), 73–74 (LE), 110–111 (DA), and 138–139 (LA) each bind NAD(+). Residue Y224 participates in substrate binding. The active-site Proton donor is the Y234. NAD(+) contacts are provided by residues K243 and 272–274 (LVT).

The protein belongs to the TER reductase family. Monomer.

The enzyme catalyses a 2,3-saturated acyl-[ACP] + NAD(+) = a (2E)-enoyl-[ACP] + NADH + H(+). It participates in lipid metabolism; fatty acid biosynthesis. Its function is as follows. Involved in the final reduction of the elongation cycle of fatty acid synthesis (FAS II). Catalyzes the reduction of a carbon-carbon double bond in an enoyl moiety that is covalently linked to an acyl carrier protein (ACP). This Methylobacillus flagellatus (strain ATCC 51484 / DSM 6875 / VKM B-1610 / KT) protein is Enoyl-[acyl-carrier-protein] reductase [NADH].